Consider the following 341-residue polypeptide: Phosphoribosylformylglycinamidine cyclo-ligase (341 aa).

Belongs to the AIR synthase family.

It localises to the cytoplasm. It catalyses the reaction 2-formamido-N(1)-(5-O-phospho-beta-D-ribosyl)acetamidine + ATP = 5-amino-1-(5-phospho-beta-D-ribosyl)imidazole + ADP + phosphate + H(+). It participates in purine metabolism; IMP biosynthesis via de novo pathway; 5-amino-1-(5-phospho-D-ribosyl)imidazole from N(2)-formyl-N(1)-(5-phospho-D-ribosyl)glycinamide: step 2/2. The protein is Phosphoribosylformylglycinamidine cyclo-ligase of Thermosynechococcus vestitus (strain NIES-2133 / IAM M-273 / BP-1).